Here is a 396-residue protein sequence, read N- to C-terminus: S-arrestin (396 aa).

The protein belongs to the arrestin family.

Arrestin is one of the major proteins of the ros (retinal rod outer segments); it binds to photoactivated-phosphorylated rhodopsin, thereby apparently preventing the transducin-mediated activation of phosphodiesterase. The sequence is that of S-arrestin from Lithobates pipiens (Northern leopard frog).